Reading from the N-terminus, the 448-residue chain is Lipoamide acyltransferase component of branched-chain alpha-keto acid dehydrogenase complex, mitochondrial (448 aa).

One can recognise a Lipoyl-binding domain in the interval 30 to 105; the sequence is VVQFKLSDIG…RVGQALIDVE (76 aa). N6-lipoyllysine is present on K71. Disordered regions lie at residues 108–146 and 191–211; these read GNVEEPEQPKKEAASSSPEAPKSSAPKAPESAHSEGKVL and TSGSTNIRTTHQAPQPSSKSY. Low complexity predominate over residues 121-136; it reads ASSSPEAPKSSAPKAP. The Peripheral subunit-binding (PSBD) domain occupies 146–183; the sequence is LATPAVRRIAIENKIKLAEVRGTGKDGRVLKEDVLKFL. A compositionally biased stretch (polar residues) spans 191-210; the sequence is TSGSTNIRTTHQAPQPSSKS. Positions 257, 272, 315, 365, 366, 390, and 392 each coordinate CoA. Residues H418 and D422 contribute to the active site.

Belongs to the 2-oxoacid dehydrogenase family. (R)-lipoate serves as cofactor. Ubiquitously expressed.

The protein localises to the mitochondrion matrix. Its subcellular location is the cytoplasm. It localises to the cytosol. It is found in the cell projection. The protein resides in the dendrite. The protein localises to the cilium. The enzyme catalyses N(6)-[(R)-dihydrolipoyl]-L-lysyl-[protein] + 2-methylpropanoyl-CoA = N(6)-[(R)-S(8)-2-methylpropanoyldihydrolipoyl]-L-lysyl-[protein] + CoA. Functionally, the branched-chain alpha-keto dehydrogenase complex catalyzes the overall conversion of alpha-keto acids to acyl-CoA and CO(2). It contains multiple copies of three enzymatic components: branched-chain alpha-keto acid decarboxylase (E1), lipoamide acyltransferase (E2) and lipoamide dehydrogenase (E3). Within this complex, the catalytic function of this enzyme is to accept, and to transfer to coenzyme A, acyl groups that are generated by the branched-chain alpha-keto acid decarboxylase component. Required for the catabolism of branched-chain amino acids and the subsequent synthesis of monomethyl branched-chain fatty acids, which are important for regulating postembryonic growth. In Caenorhabditis elegans, this protein is Lipoamide acyltransferase component of branched-chain alpha-keto acid dehydrogenase complex, mitochondrial.